Reading from the N-terminus, the 496-residue chain is tRNA-2-methylthio-N(6)-dimethylallyladenosine synthase (496 aa).

An MTTase N-terminal domain is found at 10 to 126 (RTYEVRTYGC…LPALLERARV (117 aa)). Cys-19, Cys-55, Cys-89, Cys-163, Cys-167, and Cys-170 together coordinate [4Fe-4S] cluster. The Radical SAM core domain occupies 149–380 (RESAYAAWVS…ALVNEIAWEE (232 aa)). Positions 382-451 (KRLVGRRVEL…PHHLVADGPV (70 aa)) constitute a TRAM domain. Residues 465-496 (ARNAAPAPSSGVTLGMPTVGAPAPLPDAPACR) are disordered. The span at 487-496 (APLPDAPACR) shows a compositional bias: pro residues.

Belongs to the methylthiotransferase family. MiaB subfamily. Monomer. The cofactor is [4Fe-4S] cluster.

It is found in the cytoplasm. The catalysed reaction is N(6)-dimethylallyladenosine(37) in tRNA + (sulfur carrier)-SH + AH2 + 2 S-adenosyl-L-methionine = 2-methylsulfanyl-N(6)-dimethylallyladenosine(37) in tRNA + (sulfur carrier)-H + 5'-deoxyadenosine + L-methionine + A + S-adenosyl-L-homocysteine + 2 H(+). In terms of biological role, catalyzes the methylthiolation of N6-(dimethylallyl)adenosine (i(6)A), leading to the formation of 2-methylthio-N6-(dimethylallyl)adenosine (ms(2)i(6)A) at position 37 in tRNAs that read codons beginning with uridine. The protein is tRNA-2-methylthio-N(6)-dimethylallyladenosine synthase of Nocardioides sp. (strain ATCC BAA-499 / JS614).